The following is a 418-amino-acid chain: Dihydrofolate synthase/folylpolyglutamate synthase (418 aa).

53-56 is an ATP binding site; that stretch reads GKGT. S77 contacts Mg(2+). 116-119 contacts 7,8-dihydropteroate; it reads TYFE. Position 140 (E140) interacts with Mg(2+). 147 to 149 provides a ligand contact to 7,8-dihydropteroate; it reads LDA. Mg(2+) is bound at residue H167. ATP-binding residues include N252, R284, and D297.

This sequence belongs to the folylpolyglutamate synthase family. In terms of assembly, monomer. It depends on Mg(2+) as a cofactor.

It carries out the reaction 7,8-dihydropteroate + L-glutamate + ATP = 7,8-dihydrofolate + ADP + phosphate + H(+). The enzyme catalyses (6S)-5,6,7,8-tetrahydrofolyl-(gamma-L-Glu)(n) + L-glutamate + ATP = (6S)-5,6,7,8-tetrahydrofolyl-(gamma-L-Glu)(n+1) + ADP + phosphate + H(+). The catalysed reaction is 10-formyltetrahydrofolyl-(gamma-L-Glu)(n) + L-glutamate + ATP = 10-formyltetrahydrofolyl-(gamma-L-Glu)(n+1) + ADP + phosphate + H(+). It catalyses the reaction (6R)-5,10-methylenetetrahydrofolyl-(gamma-L-Glu)(n) + L-glutamate + ATP = (6R)-5,10-methylenetetrahydrofolyl-(gamma-L-Glu)(n+1) + ADP + phosphate + H(+). It participates in cofactor biosynthesis; tetrahydrofolate biosynthesis; 7,8-dihydrofolate from 2-amino-4-hydroxy-6-hydroxymethyl-7,8-dihydropteridine diphosphate and 4-aminobenzoate: step 2/2. It functions in the pathway cofactor biosynthesis; tetrahydrofolylpolyglutamate biosynthesis. In terms of biological role, functions in two distinct reactions of the de novo folate biosynthetic pathway. Catalyzes the addition of a glutamate residue to dihydropteroate (7,8-dihydropteroate or H2Pte) to form dihydrofolate (7,8-dihydrofolate monoglutamate or H2Pte-Glu). Also catalyzes successive additions of L-glutamate to tetrahydrofolate or 10-formyltetrahydrofolate or 5,10-methylenetetrahydrofolate, leading to folylpolyglutamate derivatives. This is Dihydrofolate synthase/folylpolyglutamate synthase (folC) from Buchnera aphidicola subsp. Schizaphis graminum (strain Sg).